A 296-amino-acid chain; its full sequence is NAD kinase (296 aa).

The active-site Proton acceptor is Asp-72. NAD(+) is bound by residues 72–73 (DG), 146–147 (ND), Arg-157, Lys-174, Asp-176, 187–192 (TAYALS), and Gln-247.

The protein belongs to the NAD kinase family. A divalent metal cation is required as a cofactor.

The protein localises to the cytoplasm. The catalysed reaction is NAD(+) + ATP = ADP + NADP(+) + H(+). Involved in the regulation of the intracellular balance of NAD and NADP, and is a key enzyme in the biosynthesis of NADP. Catalyzes specifically the phosphorylation on 2'-hydroxyl of the adenosine moiety of NAD to yield NADP. The chain is NAD kinase from Pseudomonas fluorescens (strain SBW25).